Here is an 88-residue protein sequence, read N- to C-terminus: uncharacterized protein (88 aa).

The next 2 helical transmembrane spans lie at 13–33 (FLAF…GWGP) and 62–82 (WFNI…ITGI).

It localises to the cell membrane. This is an uncharacterized protein from Bacillus subtilis (strain 168).